Reading from the N-terminus, the 410-residue chain is Lissencephaly-1 homolog B (410 aa).

The 33-residue stretch at 7–39 (QRDELNRAIADYLRSNGYEEAYSTFKKEAELDM) folds into the LisH domain. A coiled-coil region spans residues 56–82 (TSVIRLQKKVMELESKLNEAKEEITLG). WD repeat units lie at residues 106 to 147 (GHRS…RTLK), 148 to 187 (GHTDSVQDISFDQTGKLLASCSADMTIKLWDFQGFECIRT), 190 to 229 (GHDHNVSSVAIMPNGDHIVSASRDKTIKMWEVATGYCVKT), 232 to 271 (GHREWVRMVRPNQDGSLIASCSNDQTVRVWVATSKECKAE), 274 to 333 (EHEH…CLMT), 336 to 375 (GHDNWVRGVLVHPGGRFIVSCADDKTLRIWDYKNKRCMKT), and 378 to 410 (AHEHFVTSLDMHQTAPYVVTGSVDQTVKVWECR).

The protein belongs to the WD repeat LIS1/nudF family. In terms of assembly, can self-associate. Component of the cytosolic PAF-AH (I) heterotetrameric enzyme, which is composed of PAFAH1B1 (beta), PAFAH1B2 (alpha2) and PAFAH1B3 (alpha1) subunits. The catalytic activity of the enzyme resides in the alpha1 (PAFAH1B3) and alpha2 (PAFAH1B2) subunits, whereas the beta subunit (PAFAH1B1) has regulatory activity. Trimer formation is not essential for the catalytic activity. Interacts with dynein, dynactin, nde1 and ndel1.

It localises to the cytoplasm. It is found in the cytoskeleton. Its subcellular location is the microtubule organizing center. The protein resides in the centrosome. Regulatory subunit (beta subunit) of the cytosolic type I platelet-activating factor (PAF) acetylhydrolase (PAF-AH (I)), an enzyme that catalyzes the hydrolyze of the acetyl group at the sn-2 position of PAF and its analogs and participates in PAF inactivation. Regulates the PAF-AH (I) activity in a catalytic dimer composition-dependent manner. Positively regulates the activity of the minus-end directed microtubule motor protein dynein. May enhance dynein-mediated microtubule sliding by targeting dynein to the microtubule plus end. Required for several dynein- and microtubule-dependent processes such as the maintenance of Golgi integrity, the peripheral transport of microtubule fragments and the coupling of the nucleus and centrosome. May be required for proliferation of neuronal precursors and neuronal migration. This is Lissencephaly-1 homolog B (pafah1b1-2) from Salmo salar (Atlantic salmon).